The primary structure comprises 418 residues: Putative competence-damage inducible protein (418 aa).

It belongs to the CinA family.

The protein is Putative competence-damage inducible protein of Streptococcus gordonii (strain Challis / ATCC 35105 / BCRC 15272 / CH1 / DL1 / V288).